A 404-amino-acid chain; its full sequence is S-adenosylmethionine synthase (404 aa).

Histidine 17 provides a ligand contact to ATP. Aspartate 19 is a binding site for Mg(2+). Residue glutamate 45 coordinates K(+). 2 residues coordinate L-methionine: glutamate 58 and glutamine 101. Residues 101-111 (QSPDINRGVDR) are flexible loop. Residues 172 to 174 (DAK), 246 to 247 (RF), aspartate 255, 261 to 262 (RK), alanine 278, and lysine 282 contribute to the ATP site. Aspartate 255 is an L-methionine binding site. An L-methionine-binding site is contributed by lysine 286.

This sequence belongs to the AdoMet synthase family. In terms of assembly, homotetramer; dimer of dimers. Mg(2+) serves as cofactor. It depends on K(+) as a cofactor.

The protein resides in the cytoplasm. The catalysed reaction is L-methionine + ATP + H2O = S-adenosyl-L-methionine + phosphate + diphosphate. Its pathway is amino-acid biosynthesis; S-adenosyl-L-methionine biosynthesis; S-adenosyl-L-methionine from L-methionine: step 1/1. Catalyzes the formation of S-adenosylmethionine (AdoMet) from methionine and ATP. The overall synthetic reaction is composed of two sequential steps, AdoMet formation and the subsequent tripolyphosphate hydrolysis which occurs prior to release of AdoMet from the enzyme. The chain is S-adenosylmethionine synthase from Chlorobaculum tepidum (strain ATCC 49652 / DSM 12025 / NBRC 103806 / TLS) (Chlorobium tepidum).